Consider the following 326-residue polypeptide: Nicotianamine synthase 2 (326 aa).

Belongs to the nicotianamine synthase (NAS)-like family. In terms of tissue distribution, expressed in roots.

The enzyme catalyses 3 S-adenosyl-L-methionine = nicotianamine + 3 S-methyl-5'-thioadenosine + 3 H(+). Its function is as follows. Synthesizes nicotianamine, a polyamine that is the first intermediate in the synthesis of the phytosiderophores of the mugineic acid type found in gramineae which serve as a sensor for the physiological iron status within the plant, and/or might be involved in the transport of iron. The sequence is that of Nicotianamine synthase 2 (NAS2) from Oryza sativa subsp. indica (Rice).